A 226-amino-acid chain; its full sequence is PKHD-type hydroxylase PFL_0865 (226 aa).

A Fe2OG dioxygenase domain is found at 78 to 178 (KVFPPLINCY…RYASFFWTQS (101 aa)). Residues H96, D98, and H159 each coordinate Fe cation. R169 provides a ligand contact to 2-oxoglutarate.

Fe(2+) serves as cofactor. It depends on L-ascorbate as a cofactor.

This chain is PKHD-type hydroxylase PFL_0865, found in Pseudomonas fluorescens (strain ATCC BAA-477 / NRRL B-23932 / Pf-5).